Here is a 218-residue protein sequence, read N- to C-terminus: E3 ubiquitin-protein ligase MARCHF3 (218 aa).

The RING-CH-type zinc finger occupies Ser-63–Glu-123. Zn(2+)-binding residues include Cys-71, Cys-74, Cys-87, Cys-89, His-97, Cys-100, Cys-113, and Cys-116. The next 2 membrane-spanning stretches (helical) occupy residues Leu-145–Leu-165 and Leu-180–Thr-200.

Interacts with MARCHF2 and STX6.

Its subcellular location is the cytoplasmic vesicle membrane. It localises to the early endosome membrane. It carries out the reaction S-ubiquitinyl-[E2 ubiquitin-conjugating enzyme]-L-cysteine + [acceptor protein]-L-lysine = [E2 ubiquitin-conjugating enzyme]-L-cysteine + N(6)-ubiquitinyl-[acceptor protein]-L-lysine.. Its pathway is protein modification; protein ubiquitination. Functionally, E3 ubiquitin-protein ligase which may be involved in endosomal trafficking. E3 ubiquitin ligases accept ubiquitin from an E2 ubiquitin-conjugating enzyme in the form of a thioester and then directly transfer the ubiquitin to targeted substrates. This chain is E3 ubiquitin-protein ligase MARCHF3 (Marchf3), found in Mus musculus (Mouse).